We begin with the raw amino-acid sequence, 199 residues long: Ras-related and estrogen-regulated growth inhibitor (199 aa).

Residues 13–20 (GRAGVGKS), 60–64 (DTAGQ), and 118–121 (NKAD) each bind GTP.

It belongs to the small GTPase superfamily. Ras family. As to expression, detected in heart, brain, placenta, lung, liver, skin, kidney and pancreas. Detected in estrogen receptor-positive breast-derived cell lines, but not in estrogen receptor-negative cell lines. Expression is decreased or lost in a significant proportion of primary breast tumors with poor clinical prognosis.

It localises to the cytoplasm. It catalyses the reaction GTP + H2O = GDP + phosphate + H(+). Binds GDP/GTP and possesses intrinsic GTPase activity. Has higher affinity for GDP than for GTP. In cell lines overexpression leads to a reduction in the rate of proliferation, colony formation and in tumorigenic potential. The protein is Ras-related and estrogen-regulated growth inhibitor (RERG) of Homo sapiens (Human).